We begin with the raw amino-acid sequence, 643 residues long: Long-chain fatty acid transport protein 4 (643 aa).

A run of 2 helical transmembrane segments spans residues 20 to 42 and 139 to 156; these read LPWT…WRFI and FVGL…AALI. 243–254 contacts AMP; that stretch reads YIYTSGTTGLPK.

It belongs to the ATP-dependent AMP-binding enzyme family.

Its subcellular location is the endoplasmic reticulum membrane. It catalyses the reaction a fatty acid(in) = a fatty acid(out). It carries out the reaction (9Z,12Z)-octadecadienoate(out) = (9Z,12Z)-octadecadienoate(in). The enzyme catalyses (9Z)-octadecenoate(out) = (9Z)-octadecenoate(in). The catalysed reaction is hexadecanoate(out) = hexadecanoate(in). It catalyses the reaction a long-chain fatty acid + ATP + CoA = a long-chain fatty acyl-CoA + AMP + diphosphate. It carries out the reaction (5Z,8Z,11Z,14Z)-eicosatetraenoate + ATP + CoA = (5Z,8Z,11Z,14Z)-eicosatetraenoyl-CoA + AMP + diphosphate. The enzyme catalyses (9Z)-octadecenoate + ATP + CoA = (9Z)-octadecenoyl-CoA + AMP + diphosphate. The catalysed reaction is hexadecanoate + ATP + CoA = hexadecanoyl-CoA + AMP + diphosphate. It catalyses the reaction (E)-hexadec-2-enoate + ATP + CoA = (2E)-hexadecenoyl-CoA + AMP + diphosphate. It carries out the reaction a very long-chain fatty acid + ATP + CoA = a very long-chain fatty acyl-CoA + AMP + diphosphate. The enzyme catalyses tetracosanoate + ATP + CoA = tetracosanoyl-CoA + AMP + diphosphate. Mediates the import of long-chain fatty acids (LCFA) into the cell by facilitating their transport across cell membranes. Appears to be the principal fatty acid transporter in small intestinal enterocytes. Also functions as an acyl-CoA ligase catalyzing the ATP-dependent formation of fatty acyl-CoA using LCFA and very-long-chain fatty acids (VLCFA) as substrates, which prevents fatty acid efflux from cells and might drive more fatty acid uptake. Plays a role in the formation of the epidermal barrier. Required for fat absorption in early embryogenesis. Probably involved in fatty acid transport across the blood barrier. Indirectly inhibits RPE65 via substrate competition and via production of VLCFA derivatives like lignoceroyl-CoA. Prevents light-induced degeneration of rods and cones. The sequence is that of Long-chain fatty acid transport protein 4 (SLC27A4) from Pongo abelii (Sumatran orangutan).